Consider the following 37-residue polypeptide: Large ribosomal subunit protein bL36 (37 aa).

This sequence belongs to the bacterial ribosomal protein bL36 family.

The sequence is that of Large ribosomal subunit protein bL36 from Acidothermus cellulolyticus (strain ATCC 43068 / DSM 8971 / 11B).